Consider the following 436-residue polypeptide: Probable transporter MCH1 (436 aa).

7 consecutive transmembrane segments (helical) span residues 27 to 47 (VVAF…LLFT), 66 to 86 (MISS…GYLA), 93 to 113 (LLSL…SYLV), 119 to 139 (SVIG…SLYF), 155 to 175 (LAIS…AQIL), 188 to 208 (LEVV…ASFV), and 249 to 269 (FVSF…ILNI). The N-linked (GlcNAc...) asparagine glycan is linked to Asn278. 5 consecutive transmembrane segments (helical) span residues 295–312 (VSIM…LGVL), 325–345 (LLVV…SAIL), 347–367 (GVSY…IWGI), 373–393 (TWGS…MFYG), and 410–430 (TAGA…IWYA).

Belongs to the major facilitator superfamily.

The protein resides in the vacuole membrane. Its function is as follows. Probable transporter. The polypeptide is Probable transporter MCH1 (MCH1) (Candida albicans (strain SC5314 / ATCC MYA-2876) (Yeast)).